A 305-amino-acid polypeptide reads, in one-letter code: Phosphatidate cytidylyltransferase (305 aa).

7 consecutive transmembrane segments (helical) span residues 24 to 44 (LLVFLVILLCTSLYPSSAFIV), 97 to 117 (PEHVDLIPWFFLFFWTVHLVF), 124 to 144 (LGPIGSTGLALFCMLYVSVPI), 151 to 171 (LYGFVHTDTPFIGIWWAIFLI), 202 to 222 (TVVGFVAGCIASILVSLIFYS), 232 to 252 (IAMPWILVALGIILGISGFFG), and 277 to 297 (MLDVLDSLLLSTPIVYAILLI).

It belongs to the CDS family.

It localises to the cell membrane. The enzyme catalyses a 1,2-diacyl-sn-glycero-3-phosphate + CTP + H(+) = a CDP-1,2-diacyl-sn-glycerol + diphosphate. Its pathway is phospholipid metabolism; CDP-diacylglycerol biosynthesis; CDP-diacylglycerol from sn-glycerol 3-phosphate: step 3/3. The polypeptide is Phosphatidate cytidylyltransferase (cdsA) (Chlamydia muridarum (strain MoPn / Nigg)).